The primary structure comprises 303 residues: MTEFSASLAPQVEAFLRYLSIERQLSPLTVTSYRRQLSALMEIGEQMGLAHWQTLDAAQVRSLVSRSKRAGLHASSLALRLSALRSFLNWLVSQGVLPANPAKGVSTPRSGRHLPKNIDVDEVNKLLSIDLNDPLAVRDRAMLEVMYGAGLRLSELVGMNCKHVDLASGDVWVMGKGSKERKVPLGKTAVTWLQHWLALRELFEPQDDAIFLANTGKRISARNVQKRFAEWGVKQGVSSHIHPHKLRHSFATHMLESSGDLRAVQELLGHANLTTTQIYTHLDFQHLATVYDAAHPRAKRGKS.

The 87-residue stretch at A6 to V92 folds into the Core-binding (CB) domain. A Tyr recombinase domain is found at H113 to D292. Residues R152, K176, H244, R247, and H270 contribute to the active site. The active-site O-(3'-phospho-DNA)-tyrosine intermediate is Y279.

It belongs to the 'phage' integrase family. XerC subfamily. In terms of assembly, forms a cyclic heterotetrameric complex composed of two molecules of XerC and two molecules of XerD, in which XerC interacts with XerD via its C-terminal region, XerD interacts with XerC via its C-terminal region and so on.

It is found in the cytoplasm. Its activity is regulated as follows. FtsK may regulate the catalytic switch between XerC and XerD in the heterotetrameric complex during the two steps of the recombination process. Functionally, site-specific tyrosine recombinase, which acts by catalyzing the cutting and rejoining of the recombining DNA molecules. Binds cooperatively to specific DNA consensus sequences that are separated from XerD binding sites by a short central region, forming the heterotetrameric XerC-XerD complex that recombines DNA substrates. The complex is essential to convert dimers of the bacterial chromosome into monomers to permit their segregation at cell division. It also contributes to the segregational stability of plasmids. In the complex XerC specifically exchanges the top DNA strands. The sequence is that of Tyrosine recombinase XerC from Yersinia pestis.